A 453-amino-acid chain; its full sequence is Alpha-galacturonidase (453 aa).

11–72 serves as a coordination point for NAD(+); the sequence is IKIAYIGGGS…SQWEYKSVDS (62 aa). Substrate is bound at residue N151. Mn(2+) is bound at residue C173. H174 serves as the catalytic Proton donor. Residue H209 coordinates Mn(2+).

It belongs to the glycosyl hydrolase 4 family. Homotetramer. NAD(+) serves as cofactor. The cofactor is Mn(2+).

The enzyme catalyses [(1-&gt;4)-alpha-D-galacturonosyl](n) + H2O = alpha-D-galacturonate + [(1-&gt;4)-alpha-D-galacturonosyl](n-1). Its function is as follows. Alpha-galacturonidase able to catalyze the hydrolysis of the chromogenic substrate p-nitrophenyl-alpha-D-galacturonic acid (pNPalphaGalUA). It is probable that alpha-1,4-di-galacturonate (GalUA(2)) is the naturally occurring substrate. This Thermoanaerobacter italicus (strain DSM 9252 / Ab9) protein is Alpha-galacturonidase.